The following is a 1044-amino-acid chain: DEMETER-like protein 3 (1044 aa).

Positions 1 to 15 (MLTDGSQHTYQNGET) are enriched in polar residues. The disordered stretch occupies residues 1 to 107 (MLTDGSQHTY…KPRNPATTRL (107 aa)). Positions 16–30 (KNSKEHERKCDESAH) are enriched in basic and acidic residues. A compositionally biased stretch (basic residues) spans 38–53 (THKKKEKKNSKEKHGI). The segment covering 54–66 (KHSESEHLQDDIS) has biased composition (basic and acidic residues). Over residues 71-89 (GKGRRRNSKGTPKKLRFNR) the composition is skewed to basic residues. The DEMETER stretch occupies residues 348 to 445 (KVNLDPETIK…AFMSVAAKFP (98 aa)). Residues Cys678, Cys685, Cys688, and Cys694 each coordinate [4Fe-4S] cluster. A disordered region spans residues 1024–1044 (VRRLHTPPDERGPKFMSDDDI).

It belongs to the DNA glycosylase family. DEMETER subfamily. [4Fe-4S] cluster is required as a cofactor.

The protein resides in the nucleus. In terms of biological role, potential transcriptional activator that may act by nicking the target promoter. Catalyzes the release of 5-methylcytosine (5-meC) from DNA by a glycosylase/lyase mechanism. The chain is DEMETER-like protein 3 (DML3) from Arabidopsis thaliana (Mouse-ear cress).